Here is a 593-residue protein sequence, read N- to C-terminus: Polyphenol oxidase, chloroplastic (593 aa).

The segment covering 1 to 13 has biased composition (low complexity); the sequence is MTSLSPPVVTTPT. The tract at residues 1–34 is disordered; sequence MTSLSPPVVTTPTVPNPATKPLSPFSQNNSQVSL. A chloroplast-targeting transit peptide spans 1–89; the sequence is MTSLSPPVVT…GMGTDPFAFA (89 aa). Polar residues predominate over residues 24–34; it reads PFSQNNSQVSL. 2 disulfide bridges follow: cysteine 100–cysteine 115 and cysteine 114–cysteine 176. Cu cation contacts are provided by histidine 175, histidine 196, histidine 205, histidine 327, histidine 331, and histidine 361. Positions 179-196 form a cross-link, 2'-(S-cysteinyl)-histidine (Cys-His); that stretch reads CDGAYDQVGFPELELQIH.

It belongs to the tyrosinase family. The cofactor is Cu(2+).

Its subcellular location is the plastid. The protein resides in the chloroplast thylakoid lumen. The enzyme catalyses 2 catechol + O2 = 2 1,2-benzoquinone + 2 H2O. In terms of biological role, catalyzes the oxidation of mono- and o-diphenols to o-diquinones. This is Polyphenol oxidase, chloroplastic from Malus domestica (Apple).